Reading from the N-terminus, the 188-residue chain is NADH-quinone oxidoreductase subunit I (188 aa).

4Fe-4S ferredoxin-type domains are found at residues 44-74 (LNRYADGLEKCIGCELCAWACPADAIYVEGA) and 90-119 (QVYQINYLRCIGCGLCIEACPTRALTMTNE). Cys54, Cys57, Cys60, Cys64, Cys99, Cys102, Cys105, and Cys109 together coordinate [4Fe-4S] cluster. Residues 167–188 (TGGAAAAAQDESEVDDTAGDRP) are disordered. Positions 176–188 (DESEVDDTAGDRP) are enriched in acidic residues.

It belongs to the complex I 23 kDa subunit family. In terms of assembly, NDH-1 is composed of 14 different subunits. Subunits NuoA, H, J, K, L, M, N constitute the membrane sector of the complex. Requires [4Fe-4S] cluster as cofactor.

It is found in the cell membrane. It catalyses the reaction a quinone + NADH + 5 H(+)(in) = a quinol + NAD(+) + 4 H(+)(out). NDH-1 shuttles electrons from NADH, via FMN and iron-sulfur (Fe-S) centers, to quinones in the respiratory chain. The immediate electron acceptor for the enzyme in this species is believed to be ubiquinone. Couples the redox reaction to proton translocation (for every two electrons transferred, four hydrogen ions are translocated across the cytoplasmic membrane), and thus conserves the redox energy in a proton gradient. This chain is NADH-quinone oxidoreductase subunit I, found in Rhodococcus jostii (strain RHA1).